The following is a 164-amino-acid chain: Peptidyl-prolyl cis-trans isomerase A-like 4F (164 aa).

The PPIase cyclophilin-type domain occupies 7 to 163; sequence FFEITRDGKP…KKITIADCGQ (157 aa).

It belongs to the cyclophilin-type PPIase family. PPIase A subfamily.

The protein resides in the cytoplasm. It catalyses the reaction [protein]-peptidylproline (omega=180) = [protein]-peptidylproline (omega=0). In terms of biological role, PPIases accelerate the folding of proteins. It catalyzes the cis-trans isomerization of proline imidic peptide bonds in oligopeptides. In Homo sapiens (Human), this protein is Peptidyl-prolyl cis-trans isomerase A-like 4F.